Consider the following 143-residue polypeptide: uncharacterized protein (143 aa).

In terms of domain architecture, HTH marR-type spans 5-137; it reads DARLASDLSL…LRNAADLILE (133 aa). Residues 51–74 constitute a DNA-binding region (H-T-H motif); that stretch reads PGALAIRERVRPPSMTRVIASLAD.

In terms of assembly, homodimer.

This is an uncharacterized protein from Mycobacterium leprae (strain TN).